Here is a 187-residue protein sequence, read N- to C-terminus: Ribosome maturation factor RimM (187 aa).

One can recognise a PRC barrel domain in the interval 95–178 (DEDEFFYADL…GLVEDKDESL (84 aa)).

The protein belongs to the RimM family. As to quaternary structure, binds ribosomal protein uS19.

Its subcellular location is the cytoplasm. Functionally, an accessory protein needed during the final step in the assembly of 30S ribosomal subunit, possibly for assembly of the head region. Essential for efficient processing of 16S rRNA. May be needed both before and after RbfA during the maturation of 16S rRNA. It has affinity for free ribosomal 30S subunits but not for 70S ribosomes. This Sinorhizobium fredii (strain NBRC 101917 / NGR234) protein is Ribosome maturation factor RimM.